A 335-amino-acid polypeptide reads, in one-letter code: Nucleoid-associated protein YejK (335 aa).

It belongs to the YejK family.

Its subcellular location is the cytoplasm. The protein resides in the nucleoid. The chain is Nucleoid-associated protein YejK from Salmonella schwarzengrund (strain CVM19633).